The chain runs to 635 residues: 1-deoxy-D-xylulose-5-phosphate synthase (635 aa).

Thiamine diphosphate-binding positions include histidine 72 and 113 to 115 (GHA). Aspartate 144 lines the Mg(2+) pocket. Thiamine diphosphate is bound by residues 145-146 (GA), asparagine 174, tyrosine 287, and glutamate 370. Asparagine 174 provides a ligand contact to Mg(2+).

It belongs to the transketolase family. DXPS subfamily. In terms of assembly, homodimer. The cofactor is Mg(2+). It depends on thiamine diphosphate as a cofactor.

It carries out the reaction D-glyceraldehyde 3-phosphate + pyruvate + H(+) = 1-deoxy-D-xylulose 5-phosphate + CO2. It functions in the pathway metabolic intermediate biosynthesis; 1-deoxy-D-xylulose 5-phosphate biosynthesis; 1-deoxy-D-xylulose 5-phosphate from D-glyceraldehyde 3-phosphate and pyruvate: step 1/1. Its function is as follows. Catalyzes the acyloin condensation reaction between C atoms 2 and 3 of pyruvate and glyceraldehyde 3-phosphate to yield 1-deoxy-D-xylulose-5-phosphate (DXP). The chain is 1-deoxy-D-xylulose-5-phosphate synthase from Trichodesmium erythraeum (strain IMS101).